The chain runs to 602 residues: Myotubularin (602 aa).

The interval 1–32 (MASNSTPKYNSNSLENSLRRSPGDGMNHEQND) is disordered. Basic and acidic residues predominate over residues 17 to 31 (SLRRSPGDGMNHEQN). The 69-residue stretch at 28-96 (HEQNDEIPCL…GVIARIEKMG (69 aa)) folds into the GRAM domain. Residues 162–537 (GWAVYDAMTE…RHLELWVNYY (376 aa)) form the Myotubularin phosphatase domain. Positions 287, 312, and 313 each coordinate a 1,2-diacyl-sn-glycero-3-phospho-(1D-myo-inositol-3,5-bisphosphate). Residues Asn287, Asn312, and Ile313 each contribute to the a 1,2-diacyl-sn-glycero-3-phospho-(1D-myo-inositol-3-phosphate) site. The active-site Phosphocysteine intermediate is the Cys374. Positions 375, 376, 377, 378, 379, 380, 416, and 420 each coordinate a 1,2-diacyl-sn-glycero-3-phospho-(1D-myo-inositol-3,5-bisphosphate). Ser375, Asp376, Gly377, Trp378, Asp379, and Arg380 together coordinate a 1,2-diacyl-sn-glycero-3-phospho-(1D-myo-inositol-3-phosphate). Residue Arg420 coordinates a 1,2-diacyl-sn-glycero-3-phospho-(1D-myo-inositol-3-phosphate). A disordered region spans residues 574–602 (QITNSPKMNSSTTSPSSPSQIMPQVHTPF). The segment covering 583–592 (SSTTSPSSPS) has biased composition (low complexity).

The protein belongs to the protein-tyrosine phosphatase family. Non-receptor class myotubularin subfamily.

The protein resides in the cytoplasm. It is found in the cell membrane. It localises to the cell projection. The protein localises to the filopodium. Its subcellular location is the ruffle. The protein resides in the late endosome. It is found in the myofibril. It localises to the sarcomere. The catalysed reaction is a 1,2-diacyl-sn-glycero-3-phospho-(1D-myo-inositol-3-phosphate) + H2O = a 1,2-diacyl-sn-glycero-3-phospho-(1D-myo-inositol) + phosphate. The enzyme catalyses a 1,2-diacyl-sn-glycero-3-phospho-(1D-myo-inositol-3,5-bisphosphate) + H2O = a 1,2-diacyl-sn-glycero-3-phospho-(1D-myo-inositol-5-phosphate) + phosphate. It carries out the reaction 1,2-dioctanoyl-sn-glycero-3-phospho-(1-D-myo-inositol-3-phosphate) + H2O = 1,2-dioctanoyl-sn-glycero-3-phospho-(1D-myo-inositol) + phosphate. It catalyses the reaction 1,2-dioctanoyl-sn-glycero-3-phospho-(1D-myo-inositol-3,5-bisphosphate) + H2O = 1,2-dioctanoyl-sn-glycero-3-phospho-(1D-myo-inositol-5-phosphate) + phosphate. The catalysed reaction is 1,2-dihexadecanoyl-sn-glycero-3-phospho-(1D-myo-inositol-3,5-phosphate) + H2O = 1,2-dihexadecanoyl-sn-glycero-3-phospho-(1D-myo-inositol-5-phosphate) + phosphate. Lipid phosphatase which dephosphorylates phosphatidylinositol 3-monophosphate (PI3P) and phosphatidylinositol 3,5-bisphosphate (PI(3,5)P2). In Xenopus tropicalis (Western clawed frog), this protein is Myotubularin (mtm1).